An 822-amino-acid polypeptide reads, in one-letter code: Epidermal growth factor receptor kinase substrate 8 (822 aa).

Composition is skewed to polar residues over residues 1-10 (MNGHISNHPS) and 17-30 (SQMN…TFSQ). The disordered stretch occupies residues 1 to 39 (MNGHISNHPSSFGMYPSQMNGYGSSPTFSQTDREHGSKT). Serine 58 is modified (phosphoserine). Residues 64–194 (QYRVEHLTTF…SDSKGGKQKR (131 aa)) enclose the PTB domain. 2 disordered regions span residues 202–225 (ISNA…GTVT) and 298–320 (SKRK…TLRA). Residues 208-221 (SIPPPPRAPAPAPP) show a composition bias toward pro residues. Threonine 223 bears the Phosphothreonine mark. The segment covering 299–309 (KRKKNKKGKRK) has biased composition (basic residues). Threonine 317 bears the Phosphothreonine mark. At serine 476 the chain carries Phosphoserine. In terms of domain architecture, SH3 spans 531–590 (QPKKYAKSKYDFVARNNSELSVLKDDILEILDDRKQWWKVRNASGDSGFVPNNILDIVRP). The interval 612 to 689 (EYGPRPADTP…VDRRKSQMEE (78 aa)) is disordered. Positions 618–645 (ADTPPAPSPPPTPAPVPVPLPPSTPAPV) are enriched in pro residues. The residue at position 625 (serine 625) is a Phosphoserine. Threonine 629 carries the phosphothreonine; by MAPK modification. The interval 649–822 (KVPANITRQN…VESFDEGSSH (174 aa)) is effector region. A phosphoserine mark is found at serine 659, serine 662, and serine 685. Residues 671 to 687 (DSQRHKQLPVDRRKSQM) show a composition bias toward basic and acidic residues. Residues 680–698 (VDRRKSQMEEVQDELIHRL) form an amphipathic helix region. Helix bundle stretches follow at residues 718 to 738 (VINI…QSKG), 752 to 757 (GAQLFS), 762 to 767 (ELRTVC), and 766 to 785 (VCPE…AALE). The disordered stretch occupies residues 787 to 822 (SSGSSELQEIMRRRQEKISAAASDSGVESFDEGSSH). Serine 811 and serine 815 each carry phosphoserine.

The protein belongs to the EPS8 family. In terms of assembly, homodimer. Part of a complex consisting of ABI1, EPS8 and SOS1. Interacts with MYO15A and WHRN. Interacts with LANCL1. Interacts with EGFR; mediates EPS8 phosphorylation. Interacts with BAIAP2. Interacts with SHB. Ubiquitinated by the SCF(FBXW5) E3 ubiquitin-protein ligase complex during G2 phase, leading to its transient degradation and subsequent cell shape changes required to allow mitotic progression. Reappears at the midzone of dividing cells. In terms of processing, phosphorylation at Ser-625 and Thr-629 by MAPK following BDNF treatment promotes removal from actin and filopodia formation. Phosphorylated by several receptor tyrosine kinases. Expressed in all tissues analyzed, including heart, brain, placenta, lung, liver, skeletal muscle, kidney and pancreas. Expressed in all epithelial and fibroblastic lines examined and in some, but not all, hematopoietic cells.

Its subcellular location is the cytoplasm. It localises to the cell cortex. The protein resides in the cell projection. It is found in the ruffle membrane. The protein localises to the growth cone. Its subcellular location is the stereocilium. It localises to the synapse. The protein resides in the synaptosome. Functionally, signaling adapter that controls various cellular protrusions by regulating actin cytoskeleton dynamics and architecture. Depending on its association with other signal transducers, can regulate different processes. Together with SOS1 and ABI1, forms a trimeric complex that participates in transduction of signals from Ras to Rac by activating the Rac-specific guanine nucleotide exchange factor (GEF) activity. Acts as a direct regulator of actin dynamics by binding actin filaments and has both barbed-end actin filament capping and actin bundling activities depending on the context. Displays barbed-end actin capping activity when associated with ABI1, thereby regulating actin-based motility process: capping activity is auto-inhibited and inhibition is relieved upon ABI1 interaction. Also shows actin bundling activity when associated with BAIAP2, enhancing BAIAP2-dependent membrane extensions and promoting filopodial protrusions. Involved in the regulation of processes such as axonal filopodia growth, stereocilia length, dendritic cell migration and cancer cell migration and invasion. Acts as a regulator of axonal filopodia formation in neurons: in the absence of neurotrophic factors, negatively regulates axonal filopodia formation via actin-capping activity. In contrast, it is phosphorylated in the presence of BDNF leading to inhibition of its actin-capping activity and stimulation of filopodia formation. Component of a complex with WHRN and MYO15A that localizes at stereocilia tips and is required for elongation of the stereocilia actin core. Indirectly involved in cell cycle progression; its degradation following ubiquitination being required during G2 phase to promote cell shape changes. The sequence is that of Epidermal growth factor receptor kinase substrate 8 (EPS8) from Homo sapiens (Human).